The following is a 451-amino-acid chain: tRNA-2-methylthio-N(6)-dimethylallyladenosine synthase (451 aa).

One can recognise an MTTase N-terminal domain in the interval 3 to 120 (KKLFIQTHGC…LPEMVNAAGK (118 aa)). Positions 12, 49, 83, 156, 160, and 163 each coordinate [4Fe-4S] cluster. Residues 142 to 374 (RVEGAEAFVS…QRRISQQAYD (233 aa)) form the Radical SAM core domain. Positions 377–441 (LSMVGEVQRI…PNSLLGELVG (65 aa)) constitute a TRAM domain.

Belongs to the methylthiotransferase family. MiaB subfamily. Monomer. Requires [4Fe-4S] cluster as cofactor.

The protein resides in the cytoplasm. The catalysed reaction is N(6)-dimethylallyladenosine(37) in tRNA + (sulfur carrier)-SH + AH2 + 2 S-adenosyl-L-methionine = 2-methylsulfanyl-N(6)-dimethylallyladenosine(37) in tRNA + (sulfur carrier)-H + 5'-deoxyadenosine + L-methionine + A + S-adenosyl-L-homocysteine + 2 H(+). Its function is as follows. Catalyzes the methylthiolation of N6-(dimethylallyl)adenosine (i(6)A), leading to the formation of 2-methylthio-N6-(dimethylallyl)adenosine (ms(2)i(6)A) at position 37 in tRNAs that read codons beginning with uridine. The sequence is that of tRNA-2-methylthio-N(6)-dimethylallyladenosine synthase from Marinomonas sp. (strain MWYL1).